The following is a 195-amino-acid chain: FMN-dependent NADH:quinone oxidoreductase (195 aa).

FMN is bound by residues Ser10, 16 to 18, 91 to 94, and 135 to 138; these read SQS, MYNF, and TRGG.

It belongs to the azoreductase type 1 family. In terms of assembly, homodimer. The cofactor is FMN.

The enzyme catalyses 2 a quinone + NADH + H(+) = 2 a 1,4-benzosemiquinone + NAD(+). The catalysed reaction is N,N-dimethyl-1,4-phenylenediamine + anthranilate + 2 NAD(+) = 2-(4-dimethylaminophenyl)diazenylbenzoate + 2 NADH + 2 H(+). Quinone reductase that provides resistance to thiol-specific stress caused by electrophilic quinones. Functionally, also exhibits azoreductase activity. Catalyzes the reductive cleavage of the azo bond in aromatic azo compounds to the corresponding amines. The protein is FMN-dependent NADH:quinone oxidoreductase of Vibrio vulnificus (strain YJ016).